We begin with the raw amino-acid sequence, 444 residues long: Tubulin beta chain (444 aa).

GTP-binding residues include glutamine 11, glutamate 69, serine 138, glycine 142, threonine 143, glycine 144, asparagine 204, and asparagine 226. Glutamate 69 lines the Mg(2+) pocket.

Belongs to the tubulin family. Dimer of alpha and beta chains. A typical microtubule is a hollow water-filled tube with an outer diameter of 25 nm and an inner diameter of 15 nM. Alpha-beta heterodimers associate head-to-tail to form protofilaments running lengthwise along the microtubule wall with the beta-tubulin subunit facing the microtubule plus end conferring a structural polarity. Microtubules usually have 13 protofilaments but different protofilament numbers can be found in some organisms and specialized cells. Requires Mg(2+) as cofactor.

It is found in the cytoplasm. The protein localises to the cytoskeleton. Functionally, tubulin is the major constituent of microtubules, a cylinder consisting of laterally associated linear protofilaments composed of alpha- and beta-tubulin heterodimers. Microtubules grow by the addition of GTP-tubulin dimers to the microtubule end, where a stabilizing cap forms. Below the cap, tubulin dimers are in GDP-bound state, owing to GTPase activity of alpha-tubulin. This is Tubulin beta chain from Euplotoides octocarinatus (Freshwater ciliate).